Consider the following 708-residue polypeptide: Leukotoxin translocation ATP-binding protein LktB (708 aa).

Positions 1 to 126 (MEANHQRNDL…ACYQGQLILV (126 aa)) constitute a Peptidase C39 domain. The region spanning 155 to 437 (FLETLIVSIF…LAQLWQDFQQ (283 aa)) is the ABC transmembrane type-1 domain. 5 helical membrane passes run 159 to 179 (LIVS…FQVV), 192 to 212 (LNII…LSGL), 270 to 290 (ALTS…MWYY), 296 to 316 (LVIL…SPIL), and 389 to 409 (VMVI…LSIG). The 236-residue stretch at 469–704 (ISFKNIRFRY…SNGLYSYLHQ (236 aa)) folds into the ABC transporter domain. 503–510 (GRSGSGKS) serves as a coordination point for ATP.

The protein belongs to the ABC transporter superfamily. Protein-1 exporter (TC 3.A.1.109) family. As to quaternary structure, homodimer.

The protein localises to the cell inner membrane. The catalysed reaction is ATP + H2O + proteinSide 1 = ADP + phosphate + proteinSide 2.. In terms of biological role, part of the ABC transporter complex LktBD involved in leukotoxin export. Transmembrane domains (TMD) form a pore in the inner membrane and the ATP-binding domain (NBD) is responsible for energy generation. The polypeptide is Leukotoxin translocation ATP-binding protein LktB (lktB) (Mannheimia haemolytica (Pasteurella haemolytica)).